The following is a 365-amino-acid chain: MKKALLFSLISMVGFSPASQATQVLNGYWGYQEFLDEFPEQRNLTNALSEAVRAQPVPLSKPTQRPIKISVVYPGQQVSDYWVRNIASFEKRLYKLNINYQLNQVFTRPNADIKQQSLSLMEALKSKSDYLIFTLDTTRHRKFVEHVLDSTNTKLILQNITTPVREWDKHQPFLYVGFDHAEGSRELATEFGKFFPKHTYYSVLYFSEGYISDVRGDTFIHQVNRDNNFELQSAYYTKATKQSGYDAAKASLAKHPDVDFIYACSTDVALGAVDALAELGREDIMINGWGGGSAELDAIQKGDLDITVMRMNDDTGIAMAEAIKWDLEDKPVPTVYSGDFEIVTKADSPERIEALKKRAFRYSDN.

Residues 1 to 23 (MKKALLFSLISMVGFSPASQATQ) form the signal peptide.

The protein belongs to the bacterial solute-binding protein 2 family.

It localises to the periplasm. In terms of biological role, binds to the signaling molecule autoinducer 2 (AI-2), a furanosyl borate diester, (3a-methyl-5,6-dihydrofuro-[2,3d][1,3,2]dioxaborole-2,2,6,6a-tetraol). This complex then interacts with the LuxQ sensor protein. The protein is Autoinducer 2-binding periplasmic protein LuxP (luxP) of Vibrio harveyi (Beneckea harveyi).